A 219-amino-acid chain; its full sequence is 3,4-dihydroxy-2-butanone 4-phosphate synthase (219 aa).

D-ribulose 5-phosphate is bound by residues 37 to 38 (RE), Asp42, 150 to 154 (RRGHT), and Glu174. Mg(2+) is bound at residue Glu38. Mg(2+) is bound at residue His153.

It belongs to the DHBP synthase family. As to quaternary structure, homodimer. Mg(2+) is required as a cofactor. The cofactor is Mn(2+).

The enzyme catalyses D-ribulose 5-phosphate = (2S)-2-hydroxy-3-oxobutyl phosphate + formate + H(+). The protein operates within cofactor biosynthesis; riboflavin biosynthesis; 2-hydroxy-3-oxobutyl phosphate from D-ribulose 5-phosphate: step 1/1. Catalyzes the conversion of D-ribulose 5-phosphate to formate and 3,4-dihydroxy-2-butanone 4-phosphate. This is 3,4-dihydroxy-2-butanone 4-phosphate synthase from Oleidesulfovibrio alaskensis (strain ATCC BAA-1058 / DSM 17464 / G20) (Desulfovibrio alaskensis).